The sequence spans 274 residues: Energy-coupling factor transporter ATP-binding protein EcfA1 (274 aa).

The ABC transporter domain occupies 9–240 (CSFINVAFSY…EQELQKIRLD (232 aa)). 41 to 48 (GHNGSGKS) contributes to the ATP binding site.

Belongs to the ABC transporter superfamily. Energy-coupling factor EcfA family. In terms of assembly, forms a stable energy-coupling factor (ECF) transporter complex composed of 2 membrane-embedded substrate-binding proteins (S component), 2 ATP-binding proteins (A component) and 2 transmembrane proteins (T component).

Its subcellular location is the cell membrane. In terms of biological role, ATP-binding (A) component of a common energy-coupling factor (ECF) ABC-transporter complex. Unlike classic ABC transporters this ECF transporter provides the energy necessary to transport a number of different substrates. The protein is Energy-coupling factor transporter ATP-binding protein EcfA1 of Mycoplasma genitalium (strain ATCC 33530 / DSM 19775 / NCTC 10195 / G37) (Mycoplasmoides genitalium).